Reading from the N-terminus, the 153-residue chain is ATP synthase subunit b' (153 aa).

Residues 20–40 (TLPLMAVQVVLLTFILNALFF) form a helical membrane-spanning segment.

The protein belongs to the ATPase B chain family. F-type ATPases have 2 components, F(1) - the catalytic core - and F(0) - the membrane proton channel. F(1) has five subunits: alpha(3), beta(3), gamma(1), delta(1), epsilon(1). F(0) has four main subunits: a(1), b(1), b'(1) and c(10-14). The alpha and beta chains form an alternating ring which encloses part of the gamma chain. F(1) is attached to F(0) by a central stalk formed by the gamma and epsilon chains, while a peripheral stalk is formed by the delta, b and b' chains.

It localises to the cellular thylakoid membrane. Its function is as follows. F(1)F(0) ATP synthase produces ATP from ADP in the presence of a proton or sodium gradient. F-type ATPases consist of two structural domains, F(1) containing the extramembraneous catalytic core and F(0) containing the membrane proton channel, linked together by a central stalk and a peripheral stalk. During catalysis, ATP synthesis in the catalytic domain of F(1) is coupled via a rotary mechanism of the central stalk subunits to proton translocation. Component of the F(0) channel, it forms part of the peripheral stalk, linking F(1) to F(0). The b'-subunit is a diverged and duplicated form of b found in plants and photosynthetic bacteria. In Prochlorococcus marinus (strain NATL2A), this protein is ATP synthase subunit b'.